The sequence spans 181 residues: Negative modulator of initiation of replication (181 aa).

Interaction with DNA regions lie at residues 87–88 (AV), 116–120 (RTRVY), and 150–156 (NTNTGRK).

Belongs to the SeqA family. In terms of assembly, homodimer. Polymerizes to form helical filaments.

It is found in the cytoplasm. Negative regulator of replication initiation, which contributes to regulation of DNA replication and ensures that replication initiation occurs exactly once per chromosome per cell cycle. Binds to pairs of hemimethylated GATC sequences in the oriC region, thus preventing assembly of replication proteins and re-initiation at newly replicated origins. Repression is relieved when the region becomes fully methylated. In Shigella flexneri, this protein is Negative modulator of initiation of replication.